The primary structure comprises 340 residues: CMP-N-acetylneuraminate-beta-galactosamide-alpha-2,3-sialyltransferase 1 (340 aa).

The Cytoplasmic portion of the chain corresponds to 1-13 (MVTLRKRTLKVLT). A helical; Signal-anchor for type II membrane protein membrane pass occupies residues 14 to 34 (FLVLFIFLTSFFLNYSHTMVA). At 35 to 340 (TTWFPKQMVL…INKIRIFKGR (306 aa)) the chain is on the lumenal side. 3 disulfides stabilise this stretch: C59–C64, C61–C139, and C142–C281. N79 carries an N-linked (GlcNAc...) asparagine glycan. Q105 contacts substrate. A glycan (N-linked (GlcNAc...) asparagine) is linked at N114. Residues N147 and N170 each contribute to the substrate site. N-linked (GlcNAc...) asparagine glycosylation is present at N201. Residues Y230, Y266, G270, G290, H299, and H316 each coordinate substrate. N-linked (GlcNAc...) asparagine glycosylation occurs at N323.

Belongs to the glycosyltransferase 29 family. The soluble form derives from the membrane form by proteolytic processing.

The protein resides in the golgi apparatus. The protein localises to the golgi stack membrane. It is found in the trans-Golgi network membrane. Its subcellular location is the secreted. It carries out the reaction a beta-D-galactosyl-(1-&gt;3)-N-acetyl-alpha-D-galactosaminyl derivative + CMP-N-acetyl-beta-neuraminate = an N-acetyl-alpha-neuraminyl-(2-&gt;3)-beta-D-galactosyl-(1-&gt;3)-N-acetyl-alpha-D-galactosaminyl derivative + CMP + H(+). It catalyses the reaction a ganglioside GM1 + CMP-N-acetyl-beta-neuraminate = a ganglioside GD1a + CMP + H(+). The enzyme catalyses a ganglioside GM1 (d18:1(4E)) + CMP-N-acetyl-beta-neuraminate = a ganglioside GD1a (d18:1(4E)) + CMP + H(+). The catalysed reaction is ganglioside GM1 (d18:1(4E)/18:0) + CMP-N-acetyl-beta-neuraminate = ganglioside GD1a (18:1(4E)/18:0) + CMP + H(+). It carries out the reaction a ganglioside GA1 + CMP-N-acetyl-beta-neuraminate = a ganglioside GM1b + CMP + H(+). It catalyses the reaction a ganglioside GA1 (d18:1(4E)) + CMP-N-acetyl-beta-neuraminate = a ganglioside GM1b (d18:1(4E)) + CMP + H(+). The enzyme catalyses a ganglioside GD1b + CMP-N-acetyl-beta-neuraminate = a ganglioside GT1b + CMP + H(+). The catalysed reaction is a 3-O-[beta-D-galactosyl-(1-&gt;3)-N-acetyl-alpha-D-galactosaminyl]-L-threonyl-[protein] + CMP-N-acetyl-beta-neuraminate = a 3-O-[N-acetyl-alpha-neuraminyl-(2-&gt;3)-beta-D-galactosyl-(1-&gt;3)-N-acetyl-alpha-D-galactosaminyl]-L-threonyl-[protein] + CMP + H(+). It carries out the reaction a 3-O-[beta-D-galactosyl-(1-&gt;3)-N-acetyl-alpha-D-galactosaminyl]-L-seryl-[protein] + CMP-N-acetyl-beta-neuraminate = 3-O-[N-acetyl-alpha-neuraminyl-(2-&gt;3)-beta-D-galactosyl-(1-&gt;3)-N-acetyl-alpha-D-galactosaminyl]-L-seryl-[protein] + CMP + H(+). It functions in the pathway protein modification; protein glycosylation. It participates in glycolipid biosynthesis. Functionally, a beta-galactoside alpha2-&gt;3 sialyltransferase involved in terminal sialylation of glycoproteins and glycolipids. Catalyzes the transfer of sialic acid (N-acetyl-neuraminic acid; Neu5Ac) from the nucleotide sugar donor CMP-Neu5Ac onto acceptor Galbeta-(1-&gt;3)-GalNAc-terminated glycoconjugates through an alpha2-3 linkage. Adds sialic acid to the core 1 O-glycan, Galbeta-(1-&gt;3)-GalNAc-O-Ser/Thr, which is a major structure of mucin-type O-glycans. As part of a homeostatic mechanism that regulates CD8-positive T cell numbers, sialylates core 1 O-glycans of T cell glycoproteins, SPN/CD43 and PTPRC/CD45. Prevents premature apoptosis of thymic CD8-positive T cells prior to peripheral emigration, whereas in the secondary lymphoid organs controls the survival of CD8-positive memory T cells generated following a successful immune response. Transfers sialic acid to asialofetuin, presumably onto Galbeta-(1-&gt;3)-GalNAc-O-Ser. Sialylates GM1a, GA1 and GD1b gangliosides to form GD1a, GM1b and GT1b, respectively. This Pan troglodytes (Chimpanzee) protein is CMP-N-acetylneuraminate-beta-galactosamide-alpha-2,3-sialyltransferase 1 (ST3GAL1).